Reading from the N-terminus, the 680-residue chain is DNA-directed RNA polymerase subunit beta' (680 aa).

Residues Cys69, Cys71, Cys87, and Cys90 each coordinate Zn(2+). Mg(2+) contacts are provided by Asp489, Asp491, and Asp493.

It belongs to the RNA polymerase beta' chain family. RpoC1 subfamily. In terms of assembly, in plastids the minimal PEP RNA polymerase catalytic core is composed of four subunits: alpha, beta, beta', and beta''. When a (nuclear-encoded) sigma factor is associated with the core the holoenzyme is formed, which can initiate transcription. The cofactor is Mg(2+). Zn(2+) is required as a cofactor.

It localises to the plastid. The protein resides in the chloroplast. The catalysed reaction is RNA(n) + a ribonucleoside 5'-triphosphate = RNA(n+1) + diphosphate. DNA-dependent RNA polymerase catalyzes the transcription of DNA into RNA using the four ribonucleoside triphosphates as substrates. This is DNA-directed RNA polymerase subunit beta' from Arabis hirsuta (Hairy rock-cress).